We begin with the raw amino-acid sequence, 270 residues long: Basigin (270 aa).

The N-terminal stretch at 1–21 (MAAVLFALLALALLRAGGASA) is a signal peptide. One can recognise an Ig-like C2-type domain in the interval 22-103 (AAGTVTTSVQ…TGEATLTVDG (82 aa)). Residues 22–207 (AAGTVTTSVQ…VTLRVRSRLA (186 aa)) are Extracellular-facing. Disulfide bonds link cysteine 41-cysteine 87 and cysteine 126-cysteine 185. N-linked (GlcNAc...) asparagine glycosylation is found at asparagine 44, asparagine 75, asparagine 152, and asparagine 186. The 99-residue stretch at 105-203 (PRIKAVKKSE…DAAVVTLRVR (99 aa)) folds into the Ig-like V-type domain. The chain crosses the membrane as a helical span at residues 208-228 (ALWPFLGIVAEVLVLVTVIFI). The Cytoplasmic segment spans residues 229–270 (YEKRRKPDEVLDDEDAGAAPLKSSGHHVNDDKGKNVRQRNAS). The segment at 239–270 (LDDEDAGAAPLKSSGHHVNDDKGKNVRQRNAS) is disordered. Serine 252 carries the post-translational modification Phosphoserine.

Homooligomer. Interacts with VEGFA, KDR/VEGFR2, PPIA/CYPA, SLC1A3, SLC16A12, SLC16A11, ATP1B2, MAG, L1CAM and AJAP1. Interacts with PPIL2; regulates BSG transport to the cell membrane. Interacts with XKR8; promoting its localization at the cell membrane. Interacts with SLC16A3; interaction mediates SLC16A3 targeting to the plasma membrane. Interacts with SLC16A1; interaction mediates SLC16A1 targeting to the plasma membrane. Interacts with SLC16A6; this interaction mediates targeting to the plasma membrane.

It localises to the cell membrane. The protein resides in the endoplasmic reticulum membrane. Its subcellular location is the basolateral cell membrane. Signaling receptor for cyclophilins, essential for PPIA/CYPA and PPIB/CYPB-dependent signaling related to chemotaxis and adhesion of immune cells. Plays an important role in targeting the monocarboxylate transporters SLC16A1/GLUT1, SLC16A3, SLC16A8, SLC16A11 and SLC16A12 to the plasma membrane. Acts as a coreceptor for vascular endothelial growth factor receptor 2 (KDR/VEGFR2) in endothelial cells enhancing its VEGFA-mediated activation and downstream signaling. Promotes angiogenesis through EPAS1/HIF2A-mediated up-regulation of VEGFA and KDR/VEGFR2 in endothelial cells. The sequence is that of Basigin (BSG) from Oryctolagus cuniculus (Rabbit).